The primary structure comprises 482 residues: PAN domain-containing protein At5g03700 (482 aa).

The N-terminal stretch at 1–31 is a signal peptide; that stretch reads MEGLCLNSFTRVLLLLFVFLVFSHKWQRVNA. The PAN domain maps to 330 to 411; the sequence is CDKTTEFKVV…SKLGYFKVRE (82 aa). 2 cysteine pairs are disulfide-bonded: Cys363/Cys385 and Cys367/Cys373. A helical transmembrane segment spans residues 425 to 445; sequence GMSLLAVIALVLMVAMVYVGF.

The protein localises to the membrane. The protein is PAN domain-containing protein At5g03700 of Arabidopsis thaliana (Mouse-ear cress).